A 40-amino-acid chain; its full sequence is Photosystem II reaction center protein J (40 aa).

The chain crosses the membrane as a helical span at residues 8–28; it reads IPLWVVATIAGLGVITVVGIF.

The protein belongs to the PsbJ family. PSII is composed of 1 copy each of membrane proteins PsbA, PsbB, PsbC, PsbD, PsbE, PsbF, PsbH, PsbI, PsbJ, PsbK, PsbL, PsbM, PsbT, PsbX, PsbY, PsbZ, Psb30/Ycf12, peripheral proteins PsbO, CyanoQ (PsbQ), PsbU, PsbV and a large number of cofactors. It forms dimeric complexes.

The protein localises to the cellular thylakoid membrane. In terms of biological role, one of the components of the core complex of photosystem II (PSII). PSII is a light-driven water:plastoquinone oxidoreductase that uses light energy to abstract electrons from H(2)O, generating O(2) and a proton gradient subsequently used for ATP formation. It consists of a core antenna complex that captures photons, and an electron transfer chain that converts photonic excitation into a charge separation. In Trichormus variabilis (strain ATCC 29413 / PCC 7937) (Anabaena variabilis), this protein is Photosystem II reaction center protein J.